Here is a 141-residue protein sequence, read N- to C-terminus: MAMTLQCDIVSAEREIFSGLVEMVVATGALGDLGVAYGHAPLLTSINPGPVRVIKQGGTEEIFYVSGGYLEVQPYHVTVLADTALRANDMDEAAALEAQERAQHQLAEQASEIDFQRAAVQLAEAAAQLRTLQAIKKKAGK.

Belongs to the ATPase epsilon chain family. In terms of assembly, F-type ATPases have 2 components, CF(1) - the catalytic core - and CF(0) - the membrane proton channel. CF(1) has five subunits: alpha(3), beta(3), gamma(1), delta(1), epsilon(1). CF(0) has three main subunits: a, b and c.

It localises to the cell inner membrane. In terms of biological role, produces ATP from ADP in the presence of a proton gradient across the membrane. This Cellvibrio japonicus (strain Ueda107) (Pseudomonas fluorescens subsp. cellulosa) protein is ATP synthase epsilon chain.